The following is a 68-amino-acid chain: Sec-independent protein translocase protein TatA (68 aa).

The chain crosses the membrane as a helical span at residues 1–21; it reads MGSLSIWHWLIVLLIVVLVFG. The tract at residues 42-68 is disordered; sequence GMNEGAKDGQPPAKDAGRIIDGEADKK. The span at 56–68 shows a compositional bias: basic and acidic residues; that stretch reads DAGRIIDGEADKK.

The protein belongs to the TatA/E family. In terms of assembly, the Tat system comprises two distinct complexes: a TatABC complex, containing multiple copies of TatA, TatB and TatC subunits, and a separate TatA complex, containing only TatA subunits. Substrates initially bind to the TatABC complex, which probably triggers association of the separate TatA complex to form the active translocon.

Its subcellular location is the cell inner membrane. In terms of biological role, part of the twin-arginine translocation (Tat) system that transports large folded proteins containing a characteristic twin-arginine motif in their signal peptide across membranes. TatA could form the protein-conducting channel of the Tat system. The chain is Sec-independent protein translocase protein TatA from Chromobacterium violaceum (strain ATCC 12472 / DSM 30191 / JCM 1249 / CCUG 213 / NBRC 12614 / NCIMB 9131 / NCTC 9757 / MK).